The sequence spans 149 residues: Transthyretin (149 aa).

Positions 1–20 (MAFHSLLLLCLAGLLFVSEA) are cleaved as a signal peptide. Cysteine 32 is subject to Sulfocysteine. Lysine 37 lines the L-thyroxine pocket. Glutamate 64 bears the 4-carboxyglutamate mark. 2 residues coordinate L-thyroxine: glutamate 76 and serine 139.

The protein belongs to the transthyretin family. Homotetramer. Dimer of dimers. In the homotetramer, subunits assemble around a central channel that can accommodate two ligand molecules. Interacts with RBP4. In terms of processing, sulfonation of the reactive cysteine Cys-32 enhances the stability of the native conformation of TTR, avoiding misassembly of the protein leading to amyloid formation. Detected in plasma (at protein level). Detected in liver.

It localises to the secreted. Functionally, thyroid hormone-binding protein. Probably transports thyroxine from the bloodstream to the brain. This chain is Transthyretin (TTR), found in Petaurus breviceps (Australian sugar glider).